Consider the following 288-residue polypeptide: Bifunctional protein FolD (288 aa).

Residues 166 to 168 (GAS) and isoleucine 232 contribute to the NADP(+) site.

This sequence belongs to the tetrahydrofolate dehydrogenase/cyclohydrolase family. As to quaternary structure, homodimer.

It catalyses the reaction (6R)-5,10-methylene-5,6,7,8-tetrahydrofolate + NADP(+) = (6R)-5,10-methenyltetrahydrofolate + NADPH. It carries out the reaction (6R)-5,10-methenyltetrahydrofolate + H2O = (6R)-10-formyltetrahydrofolate + H(+). The protein operates within one-carbon metabolism; tetrahydrofolate interconversion. In terms of biological role, catalyzes the oxidation of 5,10-methylenetetrahydrofolate to 5,10-methenyltetrahydrofolate and then the hydrolysis of 5,10-methenyltetrahydrofolate to 10-formyltetrahydrofolate. In Salmonella enteritidis PT4 (strain P125109), this protein is Bifunctional protein FolD.